A 343-amino-acid chain; its full sequence is 3-dehydroquinate synthase (343 aa).

NAD(+)-binding positions include 61 to 66, 95 to 99, 119 to 120, Lys-132, Lys-141, and 159 to 162; these read SGEKYK, GVISD, TT, and FLKT. 3 residues coordinate Zn(2+): Glu-174, His-231, and His-248.

This sequence belongs to the sugar phosphate cyclases superfamily. Dehydroquinate synthase family. Requires Co(2+) as cofactor. The cofactor is Zn(2+). NAD(+) serves as cofactor.

Its subcellular location is the cytoplasm. The enzyme catalyses 7-phospho-2-dehydro-3-deoxy-D-arabino-heptonate = 3-dehydroquinate + phosphate. The protein operates within metabolic intermediate biosynthesis; chorismate biosynthesis; chorismate from D-erythrose 4-phosphate and phosphoenolpyruvate: step 2/7. Functionally, catalyzes the conversion of 3-deoxy-D-arabino-heptulosonate 7-phosphate (DAHP) to dehydroquinate (DHQ). The chain is 3-dehydroquinate synthase from Helicobacter pylori (strain G27).